The following is a 456-amino-acid chain: MGCFSCFDSSDDEKLNPVDESNHGQKKQSQPTVSNNISGLPSGGEKLSSKTNGGSKRELLLPRDGLGQIAAHTFAFRELAAATMNFHPDTFLGEGGFGRVYKGRLDSTGQVVAVKQLDRNGLQGNREFLVEVLMLSLLHHPNLVNLIGYCADGDQRLLVYEFMPLGSLEDHLHDLPPDKEALDWNMRMKIAAGAAKGLEFLHDKANPPVIYRDFKSSNILLDEGFHPKLSDFGLAKLGPTGDKSHVSTRVMGTYGYCAPEYAMTGQLTVKSDVYSFGVVFLELITGRKAIDSEMPHGEQNLVAWARPLFNDRRKFIKLADPRLKGRFPTRALYQALAVASMCIQEQAATRPLIADVVTALSYLANQAYDPSKDDSRRNRDERGARLITRNDDGGGSGSKFDLEGSEKEDSPRETARILNRDINRERAVAEAKMWGESLREKRRQSEQGTSESNSTG.

Positions 1-57 (MGCFSCFDSSDDEKLNPVDESNHGQKKQSQPTVSNNISGLPSGGEKLSSKTNGGSKR) are disordered. G2 carries N-myristoyl glycine lipidation. Residues C3 and C6 are each lipidated (S-palmitoyl cysteine). The span at 12–23 (DEKLNPVDESNH) shows a compositional bias: basic and acidic residues. At S21 the chain carries Phosphoserine. The span at 27-39 (KQSQPTVSNNISG) shows a compositional bias: polar residues. Residues 86–363 (FHPDTFLGEG…ADVVTALSYL (278 aa)) enclose the Protein kinase domain. ATP-binding positions include 92 to 100 (LGEGGFGRV) and K115. At Y160 the chain carries Phosphotyrosine. The Proton acceptor role is filled by D213. S217 and S247 each carry phosphoserine. Phosphothreonine is present on residues T248 and T253. Y261 is subject to Phosphotyrosine. Residues 292-296 (SEMPH) carry the Recognition motif required for RPS5-mediated plant resistance to P.syringae motif. A disordered region spans residues 368-456 (YDPSKDDSRR…QGTSESNSTG (89 aa)). 2 stretches are compositionally biased toward basic and acidic residues: residues 370–392 (PSKDDSRRNRDERGARLITRNDD) and 400–429 (FDLEGSEKEDSPRETARILNRDINRERAVA). Residues 446-456 (EQGTSESNSTG) show a composition bias toward polar residues.

It belongs to the protein kinase superfamily. Ser/Thr protein kinase family. In infected plant cells, it interacts with the P.syringae virulence protein avrPphB. In uninfected plants, autophosphorylated form interacts with RPS5. Interacts with FLS2. In terms of processing, cleaved by avrPphB in infected plant cells. Its cleavage serves as a signal that triggers the RPS5-mediated defense system. Autophosphorylates. Autophosphorylation may be required to trigger the RPS5-mediated plant defense system. Post-translationally, palmitoylation at Cys-3 and Cys-6 are required for plasma membrane location that is essential for the RPS5-mediated plant defense response.

The protein resides in the cell membrane. The enzyme catalyses L-seryl-[protein] + ATP = O-phospho-L-seryl-[protein] + ADP + H(+). It carries out the reaction L-threonyl-[protein] + ATP = O-phospho-L-threonyl-[protein] + ADP + H(+). In terms of biological role, protein kinase required for plant defense mechanism mediated by the disease resistance (R) protein RPS5. In case of infection by Pseudomonas syringae, AvrPphB triggers RPS5-mediated defense mechanism via the cleavage of PBS1. Both kinase activity and cleavage by avrPphB are independently required to trigger the RPS5-mediated resistance. Contributes to PAMP-triggered immunity (PTI) signaling and defense responses downstream of FLS2. The polypeptide is Serine/threonine-protein kinase PBS1 (Arabidopsis thaliana (Mouse-ear cress)).